Consider the following 561-residue polypeptide: Delta(24)-sterol reductase (561 aa).

Residues 1–25 (MSDLQTPLVRPKRKKTWVDYFVKFR) are Lumenal-facing. Ser2 is modified (phosphoserine). The chain crosses the membrane as a helical; Signal-anchor span at residues 26–46 (WIIVIFIVLPFSATFYFLIYL). The Cytoplasmic portion of the chain corresponds to 47–561 (GDMWSESKSF…HLETAYAEAD (515 aa)). The 184-residue stretch at 49–232 (MWSESKSFEK…VAAEIRLIKV (184 aa)) folds into the FAD-binding PCMH-type domain. An interaction with calmodulin region spans residues 518–539 (CRKKYRAIGTFMSVYYKSKKGR).

The protein belongs to the DIMINUTO family. As to quaternary structure, interacts with calmodulin.

Its subcellular location is the microsome membrane. It catalyses the reaction lathosterol + NADP(+) = 5alpha-cholesta-7,24-dien-3beta-ol + NADPH + H(+). In terms of biological role, plays a critical role in the general process of plant cell elongation. Involved in the synthesis of campesterol, an early precursor of brassinolide. Required for the conversion of 24-methylenecholesterol to campesterol and for the conversion of isofucosterol to sitosterol. Necessary for both the isomerization and reduction of 24-methylenecholesterol. Regulates indirectly phytochrome-mediated light responses through the modulation of brassinosteroid biosynthesis. The chain is Delta(24)-sterol reductase (DIM) from Arabidopsis thaliana (Mouse-ear cress).